The chain runs to 521 residues: Cytochrome P450 1A1 (521 aa).

F229 serves as a coordination point for substrate. C463 contacts heme.

Belongs to the cytochrome P450 family. It depends on heme as a cofactor.

The protein localises to the endoplasmic reticulum membrane. Its subcellular location is the microsome membrane. It carries out the reaction an organic molecule + reduced [NADPH--hemoprotein reductase] + O2 = an alcohol + oxidized [NADPH--hemoprotein reductase] + H2O + H(+). Cytochromes P450 are a group of heme-thiolate monooxygenases. They oxidize a variety of structurally unrelated compounds, including steroids, fatty acids, and xenobiotics. In Limanda limanda (Common dab), this protein is Cytochrome P450 1A1 (cyp1a1).